The primary structure comprises 361 residues: Dynein axonemal assembly factor 8 (361 aa).

Disordered regions lie at residues 65–191 (DPAG…ERRK) and 309–334 (AQPG…RRPL). A compositionally biased stretch (polar residues) spans 136–157 (TLNTSASQSPRQGPQGEATRSP). 2 positions are modified to phosphoserine: Ser-142 and Ser-144. Low complexity predominate over residues 321–334 (GSSSSSGHLGRRPL).

It is found in the dynein axonemal particle. It localises to the cytoplasm. In terms of biological role, in cyliated cells, dynein axonemal particle-specific protein required for deployment of ODA to the axoneme. Interacts with outer dynein arm (ODA) subunits. This chain is Dynein axonemal assembly factor 8 (DNAAF8), found in Bos taurus (Bovine).